The chain runs to 182 residues: Crossover junction endodeoxyribonuclease RuvC (182 aa).

Active-site residues include Asp7, Glu67, and Asp139. Mg(2+) is bound by residues Asp7, Glu67, and Asp139.

Belongs to the RuvC family. In terms of assembly, homodimer which binds Holliday junction (HJ) DNA. The HJ becomes 2-fold symmetrical on binding to RuvC with unstacked arms; it has a different conformation from HJ DNA in complex with RuvA. In the full resolvosome a probable DNA-RuvA(4)-RuvB(12)-RuvC(2) complex forms which resolves the HJ. It depends on Mg(2+) as a cofactor.

It is found in the cytoplasm. The catalysed reaction is Endonucleolytic cleavage at a junction such as a reciprocal single-stranded crossover between two homologous DNA duplexes (Holliday junction).. Functionally, the RuvA-RuvB-RuvC complex processes Holliday junction (HJ) DNA during genetic recombination and DNA repair. Endonuclease that resolves HJ intermediates. Cleaves cruciform DNA by making single-stranded nicks across the HJ at symmetrical positions within the homologous arms, yielding a 5'-phosphate and a 3'-hydroxyl group; requires a central core of homology in the junction. The consensus cleavage sequence is 5'-(A/T)TT(C/G)-3'. Cleavage occurs on the 3'-side of the TT dinucleotide at the point of strand exchange. HJ branch migration catalyzed by RuvA-RuvB allows RuvC to scan DNA until it finds its consensus sequence, where it cleaves and resolves the cruciform DNA. In Bordetella pertussis (strain Tohama I / ATCC BAA-589 / NCTC 13251), this protein is Crossover junction endodeoxyribonuclease RuvC.